The chain runs to 793 residues: Protein smoothened (793 aa).

Positions 1–32 (MAAGRPVRGPELAPRRLLQLLLLVLLGGPGRG) are cleaved as a signal peptide. Residues 33 to 237 (AALSGNVTGP…EAEHQDMHSY (205 aa)) lie on the Extracellular side of the membrane. Residues 35-61 (LSGNVTGPGPHSASGSSRRDVPVTSPP) are disordered. Residue Asn38 is glycosylated (N-linked (GlcNAc...) asparagine). 5 disulfides stabilise this stretch: Cys68-Cys182, Cys74-Cys138, Cys82-Cys131, Cys122-Cys158, and Cys151-Cys173. The region spanning 69 to 185 (GRAAHCEPLR…DHFPEGCPNE (117 aa)) is the FZ domain. Asp99 serves as a coordination point for cholesterol. A glycan (N-linked (GlcNAc...) asparagine) is linked at Asn192. Cystine bridges form between Cys197-Cys217, Cys221-Cys299, and Cys318-Cys394. A helical membrane pass occupies residues 238-258 (IAAFGAVTGLCTLFTLATFVA). The Cytoplasmic portion of the chain corresponds to 259-265 (DWRNSNR). The chain crosses the membrane as a helical span at residues 266 to 286 (YPAVILFYVNACFFVGSIGWL). Topologically, residues 287 to 318 (AQFMDGARREIVCRADGTMRFGEPTSSETLSC) are extracellular. The helical transmembrane segment at 319–339 (VIIFVIVYYALMAGVVWFVVL) threads the bilayer. Topologically, residues 340–362 (TYAWHTSFKALGTTYQPLSGKTS) are cytoplasmic. Residues 363 to 383 (YFHLLTWSLPFVLTVAILAVA) traverse the membrane as a helical segment. At 384-406 (QVDGDSVSGICFVGYKNYRYRAG) the chain is on the extracellular side. Residue Tyr398 coordinates cholesterol. A helical transmembrane segment spans residues 407–427 (FVLAPIGLVLIVGGYFLIRGV). Residues 428–455 (MTLFSIKSNHPGLLSEKAASKINETMLR) are Cytoplasmic-facing. The helical transmembrane segment at 456–476 (LGIFGFLAFGFVLITFSCHFY) threads the bilayer. Residues 477–528 (DFFNQAEWERSFRDYVLCQANVTIGLPTKKPIPDCEIKNRPSLLVEKINLFA) lie on the Extracellular side of the membrane. Cysteines 494 and 511 form a disulfide. N-linked (GlcNAc...) asparagine glycosylation is present at Asn497. A helical transmembrane segment spans residues 529 to 549 (MFGTGIAMSTWVWTKATLLIW). The interval 542 to 573 (TKATLLIWRRTWCRLTGHSDDEPKRIKKSKMI) is interaction with BBS5 and BBS7. At 550–793 (RRTWCRLTGH…AEILDADSDF (244 aa)) the chain is on the cytoplasmic side. A phosphoserine mark is found at Ser560, Ser578, and Ser594. Residues 574-657 (AKAFSKRREL…TPVPPEEQAN (84 aa)) form a required for interaction with PRKACA region. An interaction with DLG5 region spans residues 585–597 (QNPGQELSFSMHT). Thr597 carries the post-translational modification Phosphothreonine. Residues Ser599 and Ser642 each carry the phosphoserine modification. Thr644 and Thr648 each carry phosphothreonine. Ser666 carries the post-translational modification Phosphoserine. The span at 674–684 (GRKKKRRKRKK) shows a compositional bias: basic residues. The tract at residues 674–703 (GRKKKRRKRKKEVCPLRPAPELHHSAPVPA) is disordered.

It belongs to the G-protein coupled receptor Fz/Smo family. In terms of assembly, homodimer. Interacts (via C-terminus) with protein kinase A catalytic subunit PRKACA; interacts with free PRKACA subunits and the interaction leads to sequestration of PRKACA at the membrane, preventing PRKACA-mediated phosphorylation of GLI transcription factors. Interacts with ARRB2. Interacts with BBS5 and BBS7; the interactions are indicative for the association of SMO with the BBsome complex to facilitate ciliary localization of SMO. Interacts with KIF7, DLG5 and SDCBP. Interacts with GAS8/DRC4. Phosphorylation by GRK kinases is required for interaction with protein kinase A catalytic subunit PRKACA. As to expression, during early somite stages of embryonic development, modestly up-regulated in the cells of the node (at protein level).

The protein resides in the cell membrane. Its subcellular location is the cell projection. It is found in the cilium. G protein-coupled receptor which associates with the patched protein (PTCH) to transduce hedgehog protein signaling. Binding of sonic hedgehog (SHH) to its receptor patched prevents inhibition of smoothened (SMO) by patched. When active, SMO binds to and sequesters protein kinase A catalytic subunit PRKACA at the cell membrane, preventing PRKACA-mediated phosphorylation of GLI transcription factors which releases the GLI proteins from PRKACA-mediated inhibition and allows for transcriptional activation of hedgehog pathway target genes. Required for the accumulation of KIF7, GLI2 and GLI3 in the cilia. Interacts with DLG5 at the ciliary base to induce the accumulation of KIF7 and GLI2 at the ciliary tip for GLI2 activation. This is Protein smoothened (Smo) from Mus musculus (Mouse).